Here is a 360-residue protein sequence, read N- to C-terminus: UPF0496 protein At3g19250 (360 aa).

Residues 1–29 (MPHCFTFKPASPEGSLGDDHLPHPSPEGS) are disordered. 2 helical membrane-spanning segments follow: residues 205-225 (HHAT…VAAS) and 229-249 (IAYH…TPYL).

It belongs to the UPF0496 family.

It localises to the membrane. The protein is UPF0496 protein At3g19250 of Arabidopsis thaliana (Mouse-ear cress).